The primary structure comprises 768 residues: Envelope glycoprotein gp160 (768 aa).

Positions 1–16 (MTKFLGIFIVLGIGIG) are cleaved as a signal peptide. Residues 17–701 (IGISTKQQWI…SWFDFSKWLN (685 aa)) lie on the Extracellular side of the membrane. N-linked (GlcNAc...) asparagine; by host glycosylation occurs at asparagine 37. Cysteines 44 and 57 form a disulfide. 7 N-linked (GlcNAc...) asparagine; by host glycosylation sites follow: asparagine 70, asparagine 141, asparagine 151, asparagine 166, asparagine 181, asparagine 200, and asparagine 211. Disulfide bonds link cysteine 103-cysteine 219, cysteine 110-cysteine 210, cysteine 115-cysteine 167, cysteine 232-cysteine 262, and cysteine 242-cysteine 254. The segment at 115 to 166 (CVELKGSATSTPATSTTAGTKLPCVRNKTDSNLQSCNDTIIEKEMNDEAASN) is V1. Residues 167-210 (CTFAMAGYIRDQKKNYSVVWNDAEIFCKRSTSHNGTKECYMIHC) form a V2 region. Residues asparagine 256, asparagine 267, asparagine 277, asparagine 283, asparagine 295, asparagine 307, asparagine 317, asparagine 374, asparagine 415, asparagine 490, and asparagine 493 are each glycosylated (N-linked (GlcNAc...) asparagine; by host). The segment at 312–344 (CKRPGNKTVLPVTIMAGLVFHSQKYNTRLRQAW) is V3. Cysteine 312 and cysteine 345 are joined by a disulfide. 2 disulfides stabilise this stretch: cysteine 397-cysteine 473 and cysteine 404-cysteine 446. A V4 region spans residues 404-446 (CKMDWFLNYLNNLTVDADHNHCKNNAGKGRSPGPCVQRTYVAC). Positions 489–496 (QNRTNVTL) are V5. The tract at residues 539 to 559 (VPFVLGFLGFLGAAGTAMGAA) is fusion peptide. The segment at 602–618 (LNARVTALEKYLADQAR) is immunosuppression. N-linked (GlcNAc...) asparagine; by host glycans are attached at residues asparagine 646 and asparagine 662. A coiled-coil region spans residues 650 to 687 (LEWEKQIEGLEGNITKQLEQAREQEEKNLDAYQKLSDW). The interval 683-704 (KLSDWSSFWSWFDFSKWLNILK) is MPER; binding to GalCer. A helical membrane pass occupies residues 702–722 (ILKIGFLAVIGVIGLRLLYTL). The Cytoplasmic portion of the chain corresponds to 723–768 (YTCIARVRQGYSPLSPQIHIHPWKGQPDNAGEPEEGGRTGKSKSTH). A YXXL motif; contains endocytosis signal motif is present at residues 733 to 736 (YSPL). The interval 744–768 (PWKGQPDNAGEPEEGGRTGKSKSTH) is disordered.

As to quaternary structure, the mature envelope protein (Env) consists of a homotrimer of non-covalently associated gp120-gp41 heterodimers. The resulting complex protrudes from the virus surface as a spike. Interacts with host CD4 and CCR5. Gp120 also interacts with the C-type lectins CD209/DC-SIGN and CLEC4M/DC-SIGNR (collectively referred to as DC-SIGN(R)). The mature envelope protein (Env) consists of a homotrimer of non-covalently associated gp120-gp41 heterodimers. The resulting complex protrudes from the virus surface as a spike. Specific enzymatic cleavages in vivo yield mature proteins. Envelope glycoproteins are synthesized as an inactive precursor that is heavily N-glycosylated and processed likely by host cell furin in the Golgi to yield the mature SU and TM proteins. The cleavage site between SU and TM requires the minimal sequence [KR]-X-[KR]-R.

It localises to the virion membrane. The protein resides in the host cell membrane. The protein localises to the host endosome membrane. The surface protein gp120 (SU) attaches the virus to the host lymphoid cell by binding to the primary receptor CD4. This interaction induces a structural rearrangement creating a high affinity binding site for a chemokine coreceptor like CCR5. This peculiar 2 stage receptor-interaction strategy allows gp120 to maintain the highly conserved coreceptor-binding site in a cryptic conformation, protected from neutralizing antibodies. These changes are transmitted to the transmembrane protein gp41 and are thought to activate its fusogenic potential by unmasking its fusion peptide. Functionally, surface protein gp120 (SU) may target the virus to gut-associated lymphoid tissue (GALT) by binding host ITGA4/ITGB7 (alpha-4/beta-7 integrins), a complex that mediates T-cell migration to the GALT. Interaction between gp120 and ITGA4/ITGB7 would allow the virus to enter GALT early in the infection, infecting and killing most of GALT's resting CD4+ T-cells. This T-cell depletion is believed to be the major insult to the host immune system leading to AIDS. Its function is as follows. The surface protein gp120 is a ligand for CD209/DC-SIGN and CLEC4M/DC-SIGNR, which are respectively found on dendritic cells (DCs), and on endothelial cells of liver sinusoids and lymph node sinuses. These interactions allow capture of viral particles at mucosal surfaces by these cells and subsequent transmission to permissive cells. DCs are professional antigen presenting cells, critical for host immunity by inducing specific immune responses against a broad variety of pathogens. They act as sentinels in various tissues where they take up antigen, process it, and present it to T-cells following migration to lymphoid organs. SIV subverts the migration properties of dendritic cells to gain access to CD4+ T-cells in lymph nodes. Virus transmission to permissive T-cells occurs either in trans (without DCs infection, through viral capture and transmission), or in cis (following DCs productive infection, through the usual CD4-gp120 interaction), thereby inducing a robust infection. In trans infection, bound virions remain infectious over days and it is proposed that they are not degraded, but protected in non-lysosomal acidic organelles within the DCs close to the cell membrane thus contributing to the viral infectious potential during DCs' migration from the periphery to the lymphoid tissues. On arrival at lymphoid tissues, intact virions recycle back to DCs' cell surface allowing virus transmission to CD4+ T-cells. Virion capture also seems to lead to MHC-II-restricted viral antigen presentation, and probably to the activation of SIV-specific CD4+ cells. In terms of biological role, the transmembrane protein gp41 (TM) acts as a class I viral fusion protein. Under the current model, the protein has at least 3 conformational states: pre-fusion native state, pre-hairpin intermediate state, and post-fusion hairpin state. During fusion of viral and target intracellular membranes, the coiled coil regions (heptad repeats) assume a trimer-of-hairpins structure, positioning the fusion peptide in close proximity to the C-terminal region of the ectodomain. The formation of this structure appears to drive apposition and subsequent fusion of viral and target cell membranes. Complete fusion occurs in host cell endosomes. The virus undergoes clathrin-dependent internalization long before endosomal fusion, thus minimizing the surface exposure of conserved viral epitopes during fusion and reducing the efficacy of inhibitors targeting these epitopes. Membranes fusion leads to delivery of the nucleocapsid into the cytoplasm. The envelope glycoprotein gp160 precursor down-modulates cell surface CD4 antigen by interacting with it in the endoplasmic reticulum and blocking its transport to the cell surface. Functionally, the gp120-gp41 heterodimer allows rapid transcytosis of the virus through CD4 negative cells such as simple epithelial monolayers of the intestinal, rectal and endocervical epithelial barriers. Both gp120 and gp41 specifically recognize glycosphingolipids galactosyl-ceramide (GalCer) or 3' sulfo-galactosyl-ceramide (GalS) present in the lipid rafts structures of epithelial cells. Binding to these alternative receptors allows the rapid transcytosis of the virus through the epithelial cells. This transcytotic vesicle-mediated transport of virions from the apical side to the basolateral side of the epithelial cells does not involve infection of the cells themselves. This Simian immunodeficiency virus agm.vervet (isolate AGM155) (SIV-agm.ver) protein is Envelope glycoprotein gp160 (env).